Consider the following 394-residue polypeptide: Class II hydrophobin TH1 (394 aa).

A signal peptide spans 1–16 (MKFLAAASLLVASTLA). Positions 17–42 (VPTSSGGSCRPRPPPGGGNGGNGGNG) are disordered. Residues 33 to 42 (GGNGGNGGNG) are compositionally biased toward gly residues. Residues 48–117 (GYQPCPAGLY…GQAVLCQDSI (70 aa)) form a hydrophobin 1 region. Cystine bridges form between cysteine 52–cysteine 101, cysteine 62–cysteine 92, cysteine 63–cysteine 75, and cysteine 102–cysteine 113. The segment at 135-157 (GNGGNNGGNTDYPGGNGGNNGGN) is disordered. Positions 148–157 (GGNGGNNGGN) are enriched in gly residues. Hydrophobin regions lie at residues 200-270 (GYQA…QPAI) and 326-394 (GSFK…CTGA).

Belongs to the cerato-ulmin hydrophobin family. As to quaternary structure, homotetramer. Further self-assembles to form highly ordered films at water-air interfaces through intermolecular interactions. Post-translationally, several N-termini starting at positions 17, 20, 22, 28 and 48 have been identified by direct sequencing. In terms of processing, contains a number of intrachain disulfide bonds. Not glycosylated.

It is found in the secreted. It localises to the cell wall. Aerial growth, conidiation, and dispersal of filamentous fungi in the environment rely upon a capability of their secreting small amphipathic proteins called hydrophobins (HPBs) with low sequence identity. Class I can self-assemble into an outermost layer of rodlet bundles on aerial cell surfaces, conferring cellular hydrophobicity that supports fungal growth, development and dispersal; whereas Class II form highly ordered films at water-air interfaces through intermolecular interactions but contribute nothing to the rodlet structure. TH1 is a class II hydrophobin that reduces water surface tension dramatically upon assembly at the water-air interface and plays a role in the formation of aerial hyphae. The chain is Class II hydrophobin TH1 (TH1) from Claviceps fusiformis (Ergot fungus).